A 259-amino-acid chain; its full sequence is MQETRPLFDRVLLTNDDGIDAPGLDVLEQVATQLAREVWIVAPAEDQSGTSHSLSLHEPLRVHRKGDRRFAVRGTPGDCVAIAISHLMKDARPDIVLSGVNRGGNLGTETVFSGTVGAAMTSMLVGVPAIALSQAFTDRNAVPWDTALALAPDVIRRLVAAGWDSDACLNVNFPPRPAQDVRGLKVTNQGAGTLQGVEIVSGRDPRDIEYHWLKLARAPRDDDADSETVALGEGYVAVTPLKFERTHDQALARLRTSLG.

Residues D16, D17, S48, and N101 each coordinate a divalent metal cation.

This sequence belongs to the SurE nucleotidase family. A divalent metal cation serves as cofactor.

The protein resides in the cytoplasm. The catalysed reaction is a ribonucleoside 5'-phosphate + H2O = a ribonucleoside + phosphate. Functionally, nucleotidase that shows phosphatase activity on nucleoside 5'-monophosphates. The protein is 5'-nucleotidase SurE 1 of Burkholderia lata (strain ATCC 17760 / DSM 23089 / LMG 22485 / NCIMB 9086 / R18194 / 383).